Reading from the N-terminus, the 339-residue chain is Glycerol-3-phosphate dehydrogenase [NAD(P)+] (339 aa).

Residues S15, Y16, H36, and K110 each coordinate NADPH. Sn-glycerol 3-phosphate contacts are provided by K110, G139, and T141. Position 143 (A143) interacts with NADPH. Residues K195, D248, S258, R259, and N260 each coordinate sn-glycerol 3-phosphate. K195 functions as the Proton acceptor in the catalytic mechanism. R259 provides a ligand contact to NADPH. Positions 283 and 285 each coordinate NADPH.

This sequence belongs to the NAD-dependent glycerol-3-phosphate dehydrogenase family.

It is found in the cytoplasm. The catalysed reaction is sn-glycerol 3-phosphate + NAD(+) = dihydroxyacetone phosphate + NADH + H(+). It catalyses the reaction sn-glycerol 3-phosphate + NADP(+) = dihydroxyacetone phosphate + NADPH + H(+). It functions in the pathway membrane lipid metabolism; glycerophospholipid metabolism. Functionally, catalyzes the reduction of the glycolytic intermediate dihydroxyacetone phosphate (DHAP) to sn-glycerol 3-phosphate (G3P), the key precursor for phospholipid synthesis. In Cronobacter sakazakii (strain ATCC BAA-894) (Enterobacter sakazakii), this protein is Glycerol-3-phosphate dehydrogenase [NAD(P)+].